Here is a 144-residue protein sequence, read N- to C-terminus: Interleukin-9 (144 aa).

A signal peptide spans Met-1–Gly-18. A Pyrrolidone carboxylic acid modification is found at Gln-19. N-linked (GlcNAc...) asparagine glycosylation is found at Asn-50, Asn-78, Asn-101, and Asn-114.

This sequence belongs to the IL-7/IL-9 family. In terms of assembly, interacts with IL9R. Interacts with IL2RG.

It localises to the secreted. Functionally, multifunctional cytokine secreted mainly by T-helper 2 lymphocytes and also mast cells or NKT cells that plays important roles in the immune response against parasites. Affects intestinal epithelial permeability and adaptive immunity. In addition, induces the differentiation of specific T-cell subsets such as IL-17 producing helper T-cells (TH17) and also proliferation and differentiation of mast cells. Mechanistically, exerts its biological effects through a receptor composed of IL9R subunit and a signal transducing subunit IL2RG. Receptor stimulation results in the rapid activation of JAK1 and JAK3 kinase activities leading to STAT1, STAT3 and STAT5-mediated transcriptional programs. Induction of differentiation genes seems to be mediated by STAT1 alone, while protection of cells from apoptosis depends on STAT3 and STAT5. This chain is Interleukin-9 (Il9), found in Mus musculus (Mouse).